A 665-amino-acid chain; its full sequence is Methionine--tRNA ligase (665 aa).

A 'HIGH' region motif is present at residues 12 to 22; that stretch reads YYPSGKLHIGS. The short motif at 308 to 312 is the 'KMSKS' region element; sequence KMSKS. Lysine 311 contributes to the ATP binding site. Positions 562–665 constitute a tRNA-binding domain; the sequence is TFDAVEIRVA…SSVPNGSIIG (104 aa).

It belongs to the class-I aminoacyl-tRNA synthetase family. MetG type 2B subfamily. As to quaternary structure, homodimer.

Its subcellular location is the cytoplasm. It carries out the reaction tRNA(Met) + L-methionine + ATP = L-methionyl-tRNA(Met) + AMP + diphosphate. Is required not only for elongation of protein synthesis but also for the initiation of all mRNA translation through initiator tRNA(fMet) aminoacylation. The sequence is that of Methionine--tRNA ligase (metG) from Streptococcus pyogenes serotype M18 (strain MGAS8232).